Reading from the N-terminus, the 406-residue chain is Pyruvate dehydrogenase E1 component subunit beta-2, chloroplastic (406 aa).

A chloroplast-targeting transit peptide spans 1 to 44; it reads MSSIIHGAGAATTTLSTFNSVDSKKLFVAPSRTNLSVRSQRYIV. Glu-142 serves as a coordination point for thiamine diphosphate. Residues Val-195, Ala-243, Ile-244, and Asn-248 each coordinate K(+).

Tetramer of 2 alpha and 2 beta subunits. Requires thiamine diphosphate as cofactor.

It localises to the plastid. Its subcellular location is the chloroplast. It carries out the reaction N(6)-[(R)-lipoyl]-L-lysyl-[protein] + pyruvate + H(+) = N(6)-[(R)-S(8)-acetyldihydrolipoyl]-L-lysyl-[protein] + CO2. In terms of biological role, the pyruvate dehydrogenase complex catalyzes the overall conversion of pyruvate to acetyl-CoA and CO(2). It contains multiple copies of three enzymatic components: pyruvate dehydrogenase (E1), dihydrolipoamide acetyltransferase (E2) and lipoamide dehydrogenase (E3). The polypeptide is Pyruvate dehydrogenase E1 component subunit beta-2, chloroplastic (PDH-E1 BETA) (Arabidopsis thaliana (Mouse-ear cress)).